The primary structure comprises 122 residues: Small ribosomal subunit protein bS6 (122 aa).

The protein belongs to the bacterial ribosomal protein bS6 family.

In terms of biological role, binds together with bS18 to 16S ribosomal RNA. This Neisseria gonorrhoeae (strain ATCC 700825 / FA 1090) protein is Small ribosomal subunit protein bS6.